A 516-amino-acid polypeptide reads, in one-letter code: Arginyl-tRNA--protein transferase 1 (516 aa).

The span at 150–180 (IESEEKEKEKSIKKEGSKEFIHPQSIEEKLG) shows a compositional bias: basic and acidic residues. Positions 150–206 (IESEEKEKEKSIKKEGSKEFIHPQSIEEKLGSGEPSHPIKVHIGPKPGKGADLSKPP) are disordered.

This sequence belongs to the R-transferase family. Monomer. Interacts with LIAT1; LIAT1 is not a substrate of ATE1, the interaction takes place in the cytoplasm and seems to increase ATE1 arginyltransferase activity. In terms of assembly, interacts with LIAT1; has a higher affinity than the other isoforms. In terms of tissue distribution, widely expressed.

It is found in the nucleus. Its subcellular location is the cytoplasm. It catalyses the reaction an N-terminal L-alpha-aminoacyl-[protein] + L-arginyl-tRNA(Arg) = an N-terminal L-arginyl-L-aminoacyl-[protein] + tRNA(Arg) + H(+). In terms of biological role, involved in the post-translational conjugation of arginine to the N-terminal aspartate or glutamate of a protein. This arginylation is required for degradation of the protein via the ubiquitin pathway. Does not arginylate cysteine residues. The protein is Arginyl-tRNA--protein transferase 1 of Mus musculus (Mouse).